The sequence spans 219 residues: NADH-ubiquinone oxidoreductase 23 kDa subunit, mitochondrial (219 aa).

4Fe-4S ferredoxin-type domains are found at residues Arg-111–Glu-140 and Thr-150–Asn-179. [4Fe-4S] cluster is bound by residues Cys-120, Cys-123, Cys-126, Cys-130, Cys-159, Cys-162, Cys-165, and Cys-169.

The protein belongs to the complex I 23 kDa subunit family. Complex I is composed of about 40 different subunits. [4Fe-4S] cluster serves as cofactor.

Its subcellular location is the mitochondrion. It carries out the reaction a ubiquinone + NADH + 5 H(+)(in) = a ubiquinol + NAD(+) + 4 H(+)(out). Core subunit of the mitochondrial membrane respiratory chain NADH dehydrogenase (Complex I) that is believed to belong to the minimal assembly required for catalysis. Complex I functions in the transfer of electrons from NADH to the respiratory chain. The immediate electron acceptor for the enzyme is believed to be ubiquinone. May donate electrons to ubiquinone. The chain is NADH-ubiquinone oxidoreductase 23 kDa subunit, mitochondrial (nuo21.3c) from Neurospora crassa (strain ATCC 24698 / 74-OR23-1A / CBS 708.71 / DSM 1257 / FGSC 987).